A 301-amino-acid chain; its full sequence is Protoheme IX farnesyltransferase 1 (301 aa).

9 helical membrane-spanning segments follow: residues 29-49 (VVAL…PHAV), 51-71 (VQPL…AAAL), 101-121 (ALIF…SLVN), 123-143 (LTAW…TAYL), 150-170 (NIVI…TAVT), 177-197 (ALLL…ALAI), 223-243 (CILL…LVGM), 244-264 (CGPV…YKAW), and 275-295 (AMQV…ALLL).

This sequence belongs to the UbiA prenyltransferase family. Protoheme IX farnesyltransferase subfamily.

Its subcellular location is the cell inner membrane. It catalyses the reaction heme b + (2E,6E)-farnesyl diphosphate + H2O = Fe(II)-heme o + diphosphate. The protein operates within porphyrin-containing compound metabolism; heme O biosynthesis; heme O from protoheme: step 1/1. Converts heme B (protoheme IX) to heme O by substitution of the vinyl group on carbon 2 of heme B porphyrin ring with a hydroxyethyl farnesyl side group. This is Protoheme IX farnesyltransferase 1 from Shewanella baltica (strain OS185).